Consider the following 167-residue polypeptide: NAD(P)H-quinone oxidoreductase subunit I, chloroplastic (167 aa).

2 consecutive 4Fe-4S ferredoxin-type domains span residues 55–84 (GRIHFEFDKCIACEVCVRVCPIDLPVVDWK) and 95–124 (LNYSIDFGICIFCGNCVEYCPTNCLSMTEE). Residues Cys-64, Cys-67, Cys-70, Cys-74, Cys-104, Cys-107, Cys-110, and Cys-114 each coordinate [4Fe-4S] cluster.

It belongs to the complex I 23 kDa subunit family. In terms of assembly, NDH is composed of at least 16 different subunits, 5 of which are encoded in the nucleus. The cofactor is [4Fe-4S] cluster.

Its subcellular location is the plastid. The protein resides in the chloroplast thylakoid membrane. The enzyme catalyses a plastoquinone + NADH + (n+1) H(+)(in) = a plastoquinol + NAD(+) + n H(+)(out). It catalyses the reaction a plastoquinone + NADPH + (n+1) H(+)(in) = a plastoquinol + NADP(+) + n H(+)(out). Functionally, NDH shuttles electrons from NAD(P)H:plastoquinone, via FMN and iron-sulfur (Fe-S) centers, to quinones in the photosynthetic chain and possibly in a chloroplast respiratory chain. The immediate electron acceptor for the enzyme in this species is believed to be plastoquinone. Couples the redox reaction to proton translocation, and thus conserves the redox energy in a proton gradient. This is NAD(P)H-quinone oxidoreductase subunit I, chloroplastic from Lobularia maritima (Sweet alyssum).